Consider the following 535-residue polypeptide: Arylsulfatase K (535 aa).

The signal sequence occupies residues 1 to 21; that stretch reads MGSGGPLLLLRGLLLVGAAYC. D41 and C81 together coordinate Ca(2+). C81 functions as the Nucleophile in the catalytic mechanism. C81 carries the post-translational modification 3-oxoalanine (Cys). K129 provides a ligand contact to substrate. N-linked (GlcNAc...) asparagine glycosylation is present at N194. H252 provides a ligand contact to substrate. N-linked (GlcNAc...) asparagine glycosylation is present at N263. The Ca(2+) site is built by D314 and H315. N376, N414, and N499 each carry an N-linked (GlcNAc...) asparagine glycan.

The protein belongs to the sulfatase family. The cofactor is Ca(2+). In terms of processing, the conversion to 3-oxoalanine (also known as C-formylglycine, FGly), of a serine or cysteine residue in prokaryotes and of a cysteine residue in eukaryotes, is critical for catalytic activity.

It is found in the secreted. The protein localises to the lysosome. It carries out the reaction an aryl sulfate + H2O = a phenol + sulfate + H(+). The enzyme catalyses Hydrolysis of the 2-sulfate groups of the 2-O-sulfo-D-glucuronate residues of chondroitin sulfate, heparin and heparitin sulfate.. In terms of biological role, catalyzes the hydrolysis of pseudosubstrates such as p-nitrocatechol sulfate and p-nitrophenyl sulfate. Catalyzes the hydrolysis of the 2-sulfate groups of the 2-O-sulfo-D-glucuronate residues of chondroitin sulfate, heparin and heparitin sulfate. Acts selectively on 2-sulfoglucuronate and lacks activity against 2-sulfoiduronate. The polypeptide is Arylsulfatase K (ARSK) (Gallus gallus (Chicken)).